We begin with the raw amino-acid sequence, 597 residues long: Alpha-1,2-mannosyltransferase MNN2 (597 aa).

Residues M1 to K6 lie on the Cytoplasmic side of the membrane. A helical transmembrane segment spans residues I7–N27. The Extracellular portion of the chain corresponds to V28–S597. A disordered region spans residues L39 to P89. N382 is a glycosylation site (N-linked (GlcNAc...) asparagine).

It belongs to the MNN1/MNT family. Requires Mn(2+) as cofactor.

The protein resides in the golgi apparatus membrane. The protein operates within protein modification; protein glycosylation. With respect to regulation, enzyme activity is regulated by iron. Functionally, alpha-1,2-mannosyltransferase required for cell wall integrity. Responsible for addition of the first alpha-1,2-linked mannose to form the branches on the mannan backbone of oligosaccharides. Addition of alpha-1,2-mannose is required for stabilization of the alpha-1,6-mannose backbone and hence regulates mannan fibril length; and is important for both immune recognition and virulence. Promotes iron uptake and usage along the endocytosis pathway under iron-limiting conditions. The protein is Alpha-1,2-mannosyltransferase MNN2 (MNN2) of Candida albicans (strain SC5314 / ATCC MYA-2876) (Yeast).